Here is an 88-residue protein sequence, read N- to C-terminus: Small ribosomal subunit protein uS17 (88 aa).

Belongs to the universal ribosomal protein uS17 family. Part of the 30S ribosomal subunit.

In terms of biological role, one of the primary rRNA binding proteins, it binds specifically to the 5'-end of 16S ribosomal RNA. This chain is Small ribosomal subunit protein uS17, found in Prochlorococcus marinus (strain MIT 9515).